Reading from the N-terminus, the 403-residue chain is Imidazolonepropionase (403 aa).

Fe(3+)-binding residues include His-68 and His-70. Positions 68 and 70 each coordinate Zn(2+). Residues Arg-77, Tyr-140, and His-173 each contribute to the 4-imidazolone-5-propanoate site. Tyr-140 is a binding site for N-formimidoyl-L-glutamate. His-238 is a binding site for Fe(3+). Residue His-238 participates in Zn(2+) binding. Gln-241 provides a ligand contact to 4-imidazolone-5-propanoate. Asp-313 lines the Fe(3+) pocket. Zn(2+) is bound at residue Asp-313. The N-formimidoyl-L-glutamate site is built by Asn-315 and Gly-317. 4-imidazolone-5-propanoate is bound at residue Ser-318.

Belongs to the metallo-dependent hydrolases superfamily. HutI family. Requires Zn(2+) as cofactor. It depends on Fe(3+) as a cofactor.

The protein localises to the cytoplasm. It catalyses the reaction 4-imidazolone-5-propanoate + H2O = N-formimidoyl-L-glutamate. The protein operates within amino-acid degradation; L-histidine degradation into L-glutamate; N-formimidoyl-L-glutamate from L-histidine: step 3/3. Catalyzes the hydrolytic cleavage of the carbon-nitrogen bond in imidazolone-5-propanoate to yield N-formimidoyl-L-glutamate. It is the third step in the universal histidine degradation pathway. In Hahella chejuensis (strain KCTC 2396), this protein is Imidazolonepropionase.